The following is a 267-amino-acid chain: Triosephosphate isomerase (267 aa).

12 to 14 (NWK) lines the substrate pocket. His104 acts as the Electrophile in catalysis. Residue Glu176 is the Proton acceptor of the active site. Substrate contacts are provided by residues Gly182, Ser222, and 243–244 (GG).

Belongs to the triosephosphate isomerase family. In terms of assembly, homodimer.

It is found in the cytoplasm. The enzyme catalyses D-glyceraldehyde 3-phosphate = dihydroxyacetone phosphate. It participates in carbohydrate biosynthesis; gluconeogenesis. The protein operates within carbohydrate degradation; glycolysis; D-glyceraldehyde 3-phosphate from glycerone phosphate: step 1/1. Its function is as follows. Involved in the gluconeogenesis. Catalyzes stereospecifically the conversion of dihydroxyacetone phosphate (DHAP) to D-glyceraldehyde-3-phosphate (G3P). This chain is Triosephosphate isomerase, found in Bifidobacterium longum (strain DJO10A).